The primary structure comprises 468 residues: Mitochondrial adenyl nucleotide antiporter SLC25A23 (468 aa).

Residues 1–149 (MRGSPGDAER…DHFLLHSLEN (149 aa)) form a regulatory N-terminal domain region. Over 1-188 (MRGSPGDAER…EKLTGMWWKQ (188 aa)) the chain is Mitochondrial intermembrane. Positions 9–44 (ERRQRWGRLFEELDSNKDGRVDVHELRQGLARLGGG) constitute an EF-hand 1 domain. Asp-22, Asn-24, Asp-26, Arg-28, and Glu-33 together coordinate Ca(2+). The segment at 34–67 (LRQGLARLGGGNPDPGAQQGISSEGDADPDGGLD) is disordered. The segment covering 58-67 (GDADPDGGLD) has biased composition (acidic residues). 2 EF-hand domains span residues 77-112 (EREQ…LGIS) and 113-148 (ISLE…HSLE). Ca(2+) contacts are provided by Asp-90, Asn-92, Asp-94, His-96, and Glu-101. The tract at residues 150-159 (VEDVLYFWKH) is linker region. Positions 165–468 (IGECLTVPDE…MKQALGVTSR (304 aa)) are C-terminal transmembrane transporter domain. Solcar repeat units lie at residues 183–269 (GMWW…IKRA), 277–362 (LHVQ…LKNW), and 374–462 (PGIL…MKQA). Residues 189–206 (LVAGAVAGAVSRTGTAPL) traverse the membrane as a helical segment. The Mitochondrial matrix segment spans residues 207 to 243 (DRLKVFMQVHASKTNRLNILGGLRSMVLEGGIRSLWR). The helical transmembrane segment at 244 to 263 (GNGINVLKIAPESAIKFMAY) threads the bilayer. The Mitochondrial intermembrane segment spans residues 264–286 (EQIKRAILGQQETLHVQERFVAG). The helical transmembrane segment at 287 to 300 (SLAGATAQTIIYPM) threads the bilayer. The Mitochondrial matrix segment spans residues 301–336 (EVLKTRLTLRRTGQYKGLLDCARRILEREGPRAFYR). Residues 337–356 (GYLPNVLGIIPYAGIDLAVY) traverse the membrane as a helical segment. Residues 357-379 (ETLKNWWLQQYSHDSADPGILVL) lie on the Mitochondrial intermembrane side of the membrane. Residues 380 to 397 (LACGTISSTCGQIASYPL) traverse the membrane as a helical segment. Residues 398–436 (ALVRTRMQAQASIEGGPQLSMLGLLRHILSQEGMRGLYR) lie on the Mitochondrial matrix side of the membrane. The helical transmembrane segment at 437–456 (GIAPNFMKVIPAVSISYVVY) threads the bilayer. At 457-468 (ENMKQALGVTSR) the chain is on the mitochondrial intermembrane side.

It belongs to the mitochondrial carrier (TC 2.A.29) family. Interacts with MCU. Interacts with MICU1. As to expression, expressed at low levels in most tissues examined, with highest expression in brain, skeletal muscle and pancreas.

The protein resides in the mitochondrion inner membrane. The catalysed reaction is Mg(2+)(out) + phosphate(in) + ATP(out) = Mg(2+)(in) + phosphate(out) + ATP(in). It carries out the reaction ADP(out) + phosphate(in) + H(+)(out) = ADP(in) + phosphate(out) + H(+)(in). It catalyses the reaction AMP(out) + phosphate(in) = AMP(in) + phosphate(out). The enzyme catalyses phosphate(in) + ATP(out) + 2 H(+)(out) = phosphate(out) + ATP(in) + 2 H(+)(in). The catalysed reaction is dADP(in) + ADP(out) = dADP(out) + ADP(in). It carries out the reaction Mg(2+)(in) + ADP(out) + ATP(in) + H(+)(out) = Mg(2+)(out) + ADP(in) + ATP(out) + H(+)(in). It catalyses the reaction ADP(out) + diphosphate(in) = ADP(in) + diphosphate(out). The enzyme catalyses dAMP(in) + ADP(out) + H(+)(out) = dAMP(out) + ADP(in) + H(+)(in). The catalysed reaction is 3'-AMP(in) + ADP(out) + H(+)(out) = 3'-AMP(out) + ADP(in) + H(+)(in). It carries out the reaction dAMP(out) + phosphate(in) = dAMP(in) + phosphate(out). It catalyses the reaction 3'-AMP(out) + phosphate(in) = 3'-AMP(in) + phosphate(out). The enzyme catalyses dADP(out) + phosphate(in) + H(+)(out) = dADP(in) + phosphate(out) + H(+)(in). With respect to regulation, activated by an increase in cytosolic calcium levels that induce a conformational change of the N-terminal regulatory domain, uncapping the channel and allowing transport. Inhibited by bathophenanthroline, mersalyl, p-hydroxymercuribenzoate, bromcresol purple, tannic acid, pyridoxal 5'-phosphate and p-hydroxymercuribenzoate. Functionally, electroneutral antiporter that mediates the transport of adenine nucleotides through the inner mitochondrial membrane. Originally identified as an ATP-magnesium/inorganic phosphate antiporter, it also acts as a broad specificity adenyl nucleotide antiporter. By regulating the mitochondrial matrix adenine nucleotide pool could adapt to changing cellular energetic demands and indirectly regulate adenine nucleotide-dependent metabolic pathways. Also acts as a regulator of mitochondrial calcium uptake and can probably transport trace amounts of other divalent metal cations in complex with ATP. In vitro, a low activity is also observed with guanyl and pyrimidine nucleotides. This chain is Mitochondrial adenyl nucleotide antiporter SLC25A23, found in Homo sapiens (Human).